Consider the following 244-residue polypeptide: Uridylate kinase (244 aa).

17–20 (KLSG) serves as a coordination point for ATP. Gly59 is a UMP binding site. Gly60 and Arg64 together coordinate ATP. UMP is bound by residues Asp79 and 140-147 (TGNPFFTT). ATP is bound by residues Thr167, Tyr173, and Asp176.

The protein belongs to the UMP kinase family. As to quaternary structure, homohexamer.

Its subcellular location is the cytoplasm. The enzyme catalyses UMP + ATP = UDP + ADP. Its pathway is pyrimidine metabolism; CTP biosynthesis via de novo pathway; UDP from UMP (UMPK route): step 1/1. With respect to regulation, inhibited by UTP. Its function is as follows. Catalyzes the reversible phosphorylation of UMP to UDP. The polypeptide is Uridylate kinase (Hahella chejuensis (strain KCTC 2396)).